Consider the following 458-residue polypeptide: UDP-N-acetylglucosamine 1-carboxyvinyltransferase (458 aa).

Residue 34–35 (KN) participates in phosphoenolpyruvate binding. Arg104 serves as a coordination point for UDP-N-acetyl-alpha-D-glucosamine. The active-site Proton donor is the Cys128. The residue at position 128 (Cys128) is a 2-(S-cysteinyl)pyruvic acid O-phosphothioketal. Residues Asp320 and Val342 each contribute to the UDP-N-acetyl-alpha-D-glucosamine site.

The protein belongs to the EPSP synthase family. MurA subfamily.

Its subcellular location is the cytoplasm. The catalysed reaction is phosphoenolpyruvate + UDP-N-acetyl-alpha-D-glucosamine = UDP-N-acetyl-3-O-(1-carboxyvinyl)-alpha-D-glucosamine + phosphate. It functions in the pathway cell wall biogenesis; peptidoglycan biosynthesis. Functionally, cell wall formation. Adds enolpyruvyl to UDP-N-acetylglucosamine. The polypeptide is UDP-N-acetylglucosamine 1-carboxyvinyltransferase (Prochlorococcus marinus (strain NATL1A)).